Reading from the N-terminus, the 227-residue chain is Cytochrome c oxidase subunit 2 (227 aa).

Residues 1–14 lie on the Mitochondrial intermembrane side of the membrane; that stretch reads MAYPMQLGFQDATS. Residues 15-45 traverse the membrane as a helical segment; that stretch reads PIMEELLHFHDHTLMIVFLISSLVLYIISLM. Residues 46–59 are Mitochondrial matrix-facing; sequence LTTKLTHTSTMDAQ. Residues 60–87 form a helical membrane-spanning segment; the sequence is EVETVWTILPAIILIMIALPSLRILYMM. Topologically, residues 88 to 227 are mitochondrial intermembrane; that stretch reads DEINNPSLTV…YFEKWSASML (140 aa). The Cu cation site is built by His-161, Cys-196, Glu-198, Cys-200, His-204, and Met-207. Glu-198 lines the Mg(2+) pocket. Tyr-218 is subject to Phosphotyrosine.

The protein belongs to the cytochrome c oxidase subunit 2 family. As to quaternary structure, component of the cytochrome c oxidase (complex IV, CIV), a multisubunit enzyme composed of 14 subunits. The complex is composed of a catalytic core of 3 subunits MT-CO1, MT-CO2 and MT-CO3, encoded in the mitochondrial DNA, and 11 supernumerary subunits COX4I, COX5A, COX5B, COX6A, COX6B, COX6C, COX7A, COX7B, COX7C, COX8 and NDUFA4, which are encoded in the nuclear genome. The complex exists as a monomer or a dimer and forms supercomplexes (SCs) in the inner mitochondrial membrane with NADH-ubiquinone oxidoreductase (complex I, CI) and ubiquinol-cytochrome c oxidoreductase (cytochrome b-c1 complex, complex III, CIII), resulting in different assemblies (supercomplex SCI(1)III(2)IV(1) and megacomplex MCI(2)III(2)IV(2)). Found in a complex with TMEM177, COA6, COX18, COX20, SCO1 and SCO2. Interacts with TMEM177 in a COX20-dependent manner. Interacts with COX20. Interacts with COX16. Cu cation serves as cofactor.

The protein localises to the mitochondrion inner membrane. The catalysed reaction is 4 Fe(II)-[cytochrome c] + O2 + 8 H(+)(in) = 4 Fe(III)-[cytochrome c] + 2 H2O + 4 H(+)(out). Component of the cytochrome c oxidase, the last enzyme in the mitochondrial electron transport chain which drives oxidative phosphorylation. The respiratory chain contains 3 multisubunit complexes succinate dehydrogenase (complex II, CII), ubiquinol-cytochrome c oxidoreductase (cytochrome b-c1 complex, complex III, CIII) and cytochrome c oxidase (complex IV, CIV), that cooperate to transfer electrons derived from NADH and succinate to molecular oxygen, creating an electrochemical gradient over the inner membrane that drives transmembrane transport and the ATP synthase. Cytochrome c oxidase is the component of the respiratory chain that catalyzes the reduction of oxygen to water. Electrons originating from reduced cytochrome c in the intermembrane space (IMS) are transferred via the dinuclear copper A center (CU(A)) of subunit 2 and heme A of subunit 1 to the active site in subunit 1, a binuclear center (BNC) formed by heme A3 and copper B (CU(B)). The BNC reduces molecular oxygen to 2 water molecules using 4 electrons from cytochrome c in the IMS and 4 protons from the mitochondrial matrix. The protein is Cytochrome c oxidase subunit 2 (MT-CO2) of Capra hircus (Goat).